Consider the following 453-residue polypeptide: tRNA modification GTPase MnmE (453 aa).

Arg-22, Glu-79, and Lys-119 together coordinate (6S)-5-formyl-5,6,7,8-tetrahydrofolate. Residues 215 to 376 enclose the TrmE-type G domain; it reads GMKVVIAGRP…LKQHLKSLMG (162 aa). K(+) is bound at residue Asn-225. GTP is bound by residues 225-230, 244-250, 269-272, and 334-337; these read NAGKSS, TEIAGTT, DTAG, and NKAD. Ser-229 contacts Mg(2+). Residues Thr-244, Ile-246, and Thr-249 each contribute to the K(+) site. Thr-250 lines the Mg(2+) pocket. Position 453 (Lys-453) interacts with (6S)-5-formyl-5,6,7,8-tetrahydrofolate.

Belongs to the TRAFAC class TrmE-Era-EngA-EngB-Septin-like GTPase superfamily. TrmE GTPase family. Homodimer. Heterotetramer of two MnmE and two MnmG subunits. Requires K(+) as cofactor.

It is found in the cytoplasm. Functionally, exhibits a very high intrinsic GTPase hydrolysis rate. Involved in the addition of a carboxymethylaminomethyl (cmnm) group at the wobble position (U34) of certain tRNAs, forming tRNA-cmnm(5)s(2)U34. This chain is tRNA modification GTPase MnmE, found in Shewanella halifaxensis (strain HAW-EB4).